Consider the following 1259-residue polypeptide: MAATGVLPFIRGVDLSGNDFKGGNFPEHVKSMTSLRWLKLNRTGLCYLPEELASLQKLEHLSVSHNSLTTLHGELSSLPNLRAVVARANNLKNSGVPDDIFQLDDLSVLDLSHNQLTEIPRDLENSRNMLVLNLSHNSIDNIPNQLFINLTDLLYLDLSDNNLDSLPPQMRRLVHLQTLILNNNPLMHAQLRQLPVMVSLQTLHLRNTQRTQNNMPTSLEGLSNLTDVDLSCNDLTRVPECLYSLVNLKRLNLSSNQISELSLCIDQWTKLETLNLSRNQLTSLPSAICKLSKLKKLYVNSNKIDFDGLPSGVGKLSNLVEFMAANNNLELVPEGLCRCGKLKKLVLNKNRLVTLPEAIHFLTELEVLDVRENPNLVMPPKPVDRTAEWYNIDFSLQNQLRLAGASPATVAAAGGGNSPRDHMARKMRLRRCKDSAHDDQAKQVLKGMSDVAQEKNKSIEENGDLKYSDLKTKRWDKNLEKPQLDYSEFFLEDVGQIPGVSVWQIENFIPIQVDEAFHGKFYEADCYIILKTFLDENGALNWQIFYWIGQDATLDKKAGAAIHAVNLRNYLGAECRTIREEMGDESEEFTVVFDHEISYIEGGTASGFYTVEDTQYPTRLYRVYGKKNIRLESVPLKASSLDPQFVFLLDTGLEIYVWRGGNATLGGTTKARLFAEKINKNERKSKAEITTLMQNQEPPEFWEVLGGQPEEIKKHVPDDFTPIRPKLYKVGLGLGYLELPQINYKLSVEHKDKLKLDVVPELRLVQGLLDTKGVYILDCWSDVFIWIGRKSPRLVRAAALKLGQEVCGMLHRPKHAVVIRNLEGTECQVFKSKFKNWDDVLKVDYTRNAESVKQEAGLSGKVKKDVEQKDQMKADLTALFLPRQPAMPLTEAEQMMEEWNEDLDGMEGFVLEGKKFARLPEEEFGHFHTQDCYVFLCRYWVPVEYEDDKEKGKEKGEEGDDEEKQPEEDFQCVVYFWQGREASNMGWLTFTFSLQKKFESLFPGKLEVVRMTQQQENLKFLSHFKRKFIIHKGKRKLKVDSVQPSLYHIRTNGSALCTRTIQIATDSSNLNSEFCFILKVPFESTDNQGIVYTWVGRAADPDEAKLAEEIMNTMFDDTYSKQVINEGEEPENFFWVGIGSQKTYDEDAEYMKYARLFRCSNEKGYFAVSEKCSDFCQDDLADDDIMLLDNGKEVYMWVGTQTSQVEIKLSLKACQVYIQHMRSKDTENPRKLRLVRKGNEPHCFTRCFHAWSAFKTAPA.

LRR repeat units lie at residues 7–32 (LPFI…VKSM), 33–55 (TSLR…LASL), 56–78 (QKLE…LSSL), 80–103 (NLRA…IFQL), 104–126 (DDLS…LENS), 128–149 (NMLV…LFIN), 150–173 (LTDL…MRRL), 176–201 (LQTL…VSLQ), 222–245 (LSNL…LYSL), 247–268 (NLKR…IDQW), 269–291 (TKLE…ICKL), 293–316 (KLKK…VGKL), 317–339 (SNLV…LCRC), 340–363 (GKLK…HFLT), and 365–385 (LEVL…PVDR). Gelsolin-like repeat units lie at residues 509–589 (IPIQ…SEEF), 628–702 (NIRL…PEFW), 757–830 (DVVP…CQVF), and 1170–1225 (EKCS…RSKD).

As to expression, expressed in ventricular cardiomyocytes, where it particularly localizes to intercalated disks and costamere-like structures (at protein level).

It is found in the nucleus. Its subcellular location is the cytoplasm. The protein localises to the cytoskeleton. It localises to the microtubule organizing center. The protein resides in the centrosome. It is found in the cell junction. Its subcellular location is the focal adhesion. Functionally, is a regulator of actin polymerization, required for proper myofibril organization and the assembly of cardiomyocyte cell adhesion complexes. Is a regulator of the length of sarcomeric thin filaments. Regulates cytoskeletal rearrangements involved in cytokinesis and cell migration, by inhibiting Rac1-dependent paxillin phosphorylation. May play a role as coactivator in transcriptional activation by hormone-activated nuclear receptors (NR) and acts in cooperation with NCOA2 and CARM1. Involved in estrogen hormone signaling. The sequence is that of Protein flightless-1 homolog from Danio rerio (Zebrafish).